The following is a 455-amino-acid chain: 3-isopropylmalate dehydratase large subunit (455 aa).

[4Fe-4S] cluster contacts are provided by cysteine 337, cysteine 397, and cysteine 400.

This sequence belongs to the aconitase/IPM isomerase family. LeuC type 1 subfamily. In terms of assembly, heterodimer of LeuC and LeuD. [4Fe-4S] cluster serves as cofactor.

The catalysed reaction is (2R,3S)-3-isopropylmalate = (2S)-2-isopropylmalate. The protein operates within amino-acid biosynthesis; L-leucine biosynthesis; L-leucine from 3-methyl-2-oxobutanoate: step 2/4. Functionally, catalyzes the isomerization between 2-isopropylmalate and 3-isopropylmalate, via the formation of 2-isopropylmaleate. This is 3-isopropylmalate dehydratase large subunit from Leuconostoc citreum (strain KM20).